A 226-amino-acid polypeptide reads, in one-letter code: Ras-related protein RGP1 (226 aa).

25 to 32 (GDSAVGKS) contacts GTP. An Effector region motif is present at residues 47–55 (SKATIGVEF). GTP contacts are provided by residues 73 to 77 (DTAGQ) and 131 to 134 (NKSD). Residues C223 and C224 are each lipidated (S-geranylgeranyl cysteine).

This sequence belongs to the small GTPase superfamily. Rab family.

Its subcellular location is the cell membrane. Functionally, may play an important role in plant growth and development. The polypeptide is Ras-related protein RGP1 (RGP1) (Oryza sativa subsp. japonica (Rice)).